We begin with the raw amino-acid sequence, 155 residues long: Small ribosomal subunit protein uS7cz/uS7cy (155 aa).

The protein belongs to the universal ribosomal protein uS7 family. Part of the 30S ribosomal subunit.

It is found in the plastid. The protein localises to the chloroplast. Its function is as follows. One of the primary rRNA binding proteins, it binds directly to 16S rRNA where it nucleates assembly of the head domain of the 30S subunit. This is Small ribosomal subunit protein uS7cz/uS7cy (rps7-A) from Psilotum nudum (Whisk fern).